The primary structure comprises 1021 residues: Caspase recruitment domain-containing protein 10 (1021 aa).

Residues 1–24 (MQGRADAGEADEEAGAGSGSEAEE) form a disordered region. Serine 18 carries the phosphoserine modification. Positions 23 to 115 (EEDALWERIE…EHFTLLTGQE (93 aa)) constitute a CARD domain. The stretch at 138 to 450 (TEVRRLREAR…LEAQLQRTQG (313 aa)) forms a coiled coil. Disordered regions lie at residues 475–544 (EFPS…MSDI), 597–616 (SPPA…PGLG), and 790–809 (LVRP…QLPA). Composition is skewed to basic and acidic residues over residues 495–508 (HTSE…KEIN) and 525–535 (RQREEDPEPPK).

CARD10 and BCL10 bind to each other by CARD-CARD interaction. They both participate in a complex with MALT1, where MALT1 binds to BCL10. Interacts with TMEM43; this interaction is essential for EGFR-mediated NF-kappa-B activation. As to expression, highly expressed in kidney, heart followed by brain, lung, liver, skeletal muscle and testis.

Functionally, scaffold protein that plays an important role in mediating the activation of NF-kappa-B via BCL10 or EGFR. This chain is Caspase recruitment domain-containing protein 10 (Card10), found in Mus musculus (Mouse).